Consider the following 423-residue polypeptide: Lipase member M (423 aa).

The first 33 residues, 1–33, serve as a signal peptide directing secretion; it reads MLETLSRQWIVSHRMEMWLLILVAYMFQRNVNS. N-linked (GlcNAc...) asparagine glycosylation occurs at Asn-48. An AB hydrolase-1 domain is found at 92 to 392; the sequence is PVVLLQHGLV…EWAHVDFIWG (301 aa). Residue Ser-186 is the Nucleophile of the active site. Cys-260 and Cys-269 are oxidised to a cystine. Active-site charge relay system residues include Asp-357 and His-386.

Belongs to the AB hydrolase superfamily. Lipase family. Exclusively expressed in the epidermis within the granular keratinocytes.

The protein localises to the secreted. In terms of biological role, plays a highly specific role in the last step of keratinocyte differentiation. May have an essential function in lipid metabolism of the most differentiated epidermal layers. This chain is Lipase member M (LIPM), found in Homo sapiens (Human).